Here is a 107-residue protein sequence, read N- to C-terminus: Potassium voltage-gated channel subfamily E member 3 (107 aa).

N-linked (GlcNAc...) asparagine glycans are attached at residues Asn-5, Asn-22, and Asn-45. Residues 31-54 form a disordered region; sequence CRPGPGPGSGTGPDNQTEDHRASL. Residues 61 to 81 form a helical membrane-spanning segment; it reads SYMYILFVMFLFAVTVGSLIL. Residues 72 to 83 are interaction with KCNQ1; that stretch reads FAVTVGSLILGY. Residues 82-103 lie on the Cytoplasmic side of the membrane; sequence GYTRSRKVDKRSDPYHVYIKNR.

This sequence belongs to the potassium channel KCNE family. Interacts with KCNB1. Interacts with KCNC2. Associates with KCNC4/Kv3.4. Interacts with KCNQ1; associates with a KCNQ1:KCNE3 stoichiometry of 4:4; produces a current with nearly instantaneous activation with a linear current-voltage relationship and alters membrane raft localization; affects KCNQ1 structure and gating properties.

The protein localises to the cell membrane. Its subcellular location is the cytoplasm. It localises to the perikaryon. It is found in the cell projection. The protein resides in the dendrite. The protein localises to the membrane raft. Ancillary protein that functions as a regulatory subunit of the voltage-gated potassium (Kv) channel complex composed of pore-forming and potassium-conducting alpha subunits and of regulatory beta subunits. KCNE3 beta subunit modulates the gating kinetics and enhances stability of the channel complex. Alters the gating of the delayed rectifier Kv channel containing KCNB1 alpha subunit. Associates with KCNC4/Kv3.4 alpha subunit to form the subthreshold Kv channel in skeletal muscle and to establish the resting membrane potential (RMP) in muscle cells. Association with KCNQ1/KCLQT1 alpha subunit may form the intestinal cAMP-stimulated potassium channel involved in chloride secretion that produces a current with nearly instantaneous activation with a linear current-voltage relationship. The sequence is that of Potassium voltage-gated channel subfamily E member 3 from Rattus norvegicus (Rat).